Here is a 169-residue protein sequence, read N- to C-terminus: tRNA (cytidine(56)-2'-O)-methyltransferase (169 aa).

S-adenosyl-L-methionine contacts are provided by residues Leu77, 103 to 107 (GSEKV), and 121 to 128 (IGNQPHSE).

Belongs to the aTrm56 family. Homodimer.

It is found in the cytoplasm. The enzyme catalyses cytidine(56) in tRNA + S-adenosyl-L-methionine = 2'-O-methylcytidine(56) in tRNA + S-adenosyl-L-homocysteine + H(+). In terms of biological role, specifically catalyzes the AdoMet-dependent 2'-O-ribose methylation of cytidine at position 56 in tRNAs. The chain is tRNA (cytidine(56)-2'-O)-methyltransferase from Sulfurisphaera tokodaii (strain DSM 16993 / JCM 10545 / NBRC 100140 / 7) (Sulfolobus tokodaii).